A 266-amino-acid polypeptide reads, in one-letter code: GTP cyclohydrolase MptA (266 aa).

It belongs to the GTP cyclohydrolase IV family. In terms of assembly, homodimer. It depends on Fe(2+) as a cofactor.

It carries out the reaction GTP + H2O = 7,8-dihydroneopterin 2',3'-cyclic phosphate + formate + diphosphate + H(+). The protein operates within cofactor biosynthesis; 5,6,7,8-tetrahydromethanopterin biosynthesis. Its function is as follows. Converts GTP to 7,8-dihydro-D-neopterin 2',3'-cyclic phosphate, the first intermediate in the biosynthesis of coenzyme methanopterin. The protein is GTP cyclohydrolase MptA of Pyrococcus abyssi (strain GE5 / Orsay).